The sequence spans 399 residues: Glutathione S-transferase LANCL1 (399 aa).

The residue at position 2 (Ala-2) is an N-acetylalanine. N6-acetyllysine is present on Lys-142. Zn(2+) is bound at residue Cys-276. Residue Lys-317 coordinates glutathione. Zn(2+) is bound by residues Cys-322 and His-323. Glutathione is bound at residue 364–367; the sequence is RTPD.

This sequence belongs to the LanC-like protein family. As to quaternary structure, interacts with the C-terminal of STOM. Interacts with the EPS8 SH3 domain. Interaction with EPS8 is inhibited by glutathione binding. In terms of assembly, (Microbial infection) Interacts with P.falciparum SBP1. In terms of tissue distribution, detected in erythrocytes, brain, kidney, testis, ovary, heart, lung, placenta and spleen (at protein level). Ubiquitous. Strongly expressed in brain, spinal cord, pituitary gland, kidney, heart, skeletal muscle, pancreas, ovary and testis.

The protein localises to the cytoplasm. The protein resides in the cell membrane. It catalyses the reaction RX + glutathione = an S-substituted glutathione + a halide anion + H(+). The catalysed reaction is 1-chloro-2,4-dinitrobenzene + glutathione = 2,4-dinitrophenyl-S-glutathione + chloride + H(+). Functionally, functions as a glutathione transferase. Catalyzes conjugation of the glutathione (GSH) to artificial substrates 1-chloro-2,4-dinitrobenzene (CDNB) and p-nitrophenyl acetate. Mitigates neuronal oxidative stress during normal postnatal development and in response to oxidative stresses probably through GSH antioxidant defense mechanism. May play a role in EPS8 signaling. Binds glutathione. This chain is Glutathione S-transferase LANCL1, found in Homo sapiens (Human).